Reading from the N-terminus, the 172-residue chain is Shikimate kinase (172 aa).

11 to 16 contacts ATP; sequence GTGKTA. T15 provides a ligand contact to Mg(2+). Residues D33, R57, and G79 each contribute to the substrate site. Residue R117 participates in ATP binding. R136 is a substrate binding site.

Belongs to the shikimate kinase family. As to quaternary structure, monomer. Mg(2+) is required as a cofactor.

The protein resides in the cytoplasm. The enzyme catalyses shikimate + ATP = 3-phosphoshikimate + ADP + H(+). Its pathway is metabolic intermediate biosynthesis; chorismate biosynthesis; chorismate from D-erythrose 4-phosphate and phosphoenolpyruvate: step 5/7. In terms of biological role, catalyzes the specific phosphorylation of the 3-hydroxyl group of shikimic acid using ATP as a cosubstrate. The sequence is that of Shikimate kinase from Pelotomaculum thermopropionicum (strain DSM 13744 / JCM 10971 / SI).